A 212-amino-acid polypeptide reads, in one-letter code: Cyclin-dependent kinase inhibitor 3 (212 aa).

Residues 1–12 (MKPPSSIQTSEF) show a composition bias toward polar residues. The segment at 1 to 20 (MKPPSSIQTSEFDSSDEEPI) is disordered. Residues 1-34 (MKPPSSIQTSEFDSSDEEPIEDEQTPIHISWLSL) form an interaction with CDK2 region. The Tyrosine-protein phosphatase domain occupies 33 to 201 (SLSRVNCSQF…FRDKLAAHLS (169 aa)). Cys140 acts as the Phosphocysteine intermediate in catalysis.

The protein belongs to the protein-tyrosine phosphatase family. Interacts with cyclin-dependent kinases such as CDK1, CDK2 and CDK3. Does not interact with CDK4. Interacts (via C-terminus) with phosphorylated CDK2 (via C-terminal helix). Interacts with MS4A3 (via C-terminus); the interaction enhances CDKN3 enzymatic activity.

It is found in the cytoplasm. Its subcellular location is the perinuclear region. It carries out the reaction O-phospho-L-tyrosyl-[protein] + H2O = L-tyrosyl-[protein] + phosphate. It catalyses the reaction O-phospho-L-threonyl-[protein] + H2O = L-threonyl-[protein] + phosphate. The catalysed reaction is O-phospho-L-seryl-[protein] + H2O = L-seryl-[protein] + phosphate. Functionally, may play a role in cell cycle regulation. Dual specificity CC phosphatase active toward substrates containing either phosphotyrosine or phosphoserine residues. Dephosphorylates CDK2 at 'Thr-160' in a cyclin-dependent manner. This chain is Cyclin-dependent kinase inhibitor 3, found in Homo sapiens (Human).